We begin with the raw amino-acid sequence, 220 residues long: Protein GrpE (220 aa).

Positions 1-55 (MCGGDVQGQGVASGCDEALERADSLRASDPVPVESGEGSVPGEHSQELETGASEE) are disordered.

Belongs to the GrpE family. In terms of assembly, homodimer.

It is found in the cytoplasm. In terms of biological role, participates actively in the response to hyperosmotic and heat shock by preventing the aggregation of stress-denatured proteins, in association with DnaK and GrpE. It is the nucleotide exchange factor for DnaK and may function as a thermosensor. Unfolded proteins bind initially to DnaJ; upon interaction with the DnaJ-bound protein, DnaK hydrolyzes its bound ATP, resulting in the formation of a stable complex. GrpE releases ADP from DnaK; ATP binding to DnaK triggers the release of the substrate protein, thus completing the reaction cycle. Several rounds of ATP-dependent interactions between DnaJ, DnaK and GrpE are required for fully efficient folding. In Treponema pallidum (strain Nichols), this protein is Protein GrpE.